The primary structure comprises 296 residues: Endonuclease 5 (296 aa).

A signal peptide spans 1 to 20 (MRLWIVSVLVLTHLVHGALC). A divalent metal cation is bound by residues W21 and H26. 21–26 (WGKDGH) contacts substrate. C30 and C62 are joined by a disulfide. Residues D66 and H81 each contribute to the a divalent metal cation site. Substrate contacts are provided by residues 66–72 (DEIKKLS), 81–84 (HYVN), and 91–96 (NYEYCR). 3 cysteine pairs are disulfide-bonded: C90-C243, C98-C108, and C223-C230. 2 residues coordinate substrate: N115 and Y133. Residue N115 is glycosylated (N-linked (GlcNAc...) asparagine). N134 carries N-linked (GlcNAc...) asparagine glycosylation. H144, D148, and H154 together coordinate a divalent metal cation. A substrate binding region spans residues 144–193 (HYMGDVHQPLHTGFLGDLGGNTIIVNWYHNKSNLHHVWDNMIIDSALETY). An N-linked (GlcNAc...) asparagine glycan is attached at N173. 2 residues coordinate a divalent metal cation: H178 and D182. N195 is a glycosylation site (N-linked (GlcNAc...) asparagine). Residues 281–296 (ATLNRIFSAKPKLAGL) constitute a propeptide, removed in mature form.

Belongs to the nuclease type I family. In terms of assembly, monomer. Zn(2+) serves as cofactor.

The enzyme catalyses Endonucleolytic cleavage to 5'-phosphomononucleotide and 5'-phosphooligonucleotide end-products.. Hydrolyzes, with low efficiency, only single-stranded DNA and RNA without apparent specificity for bases. Endonuclease that recognizes and cleaves some mismatches with high efficiency, including heteroduplex double-stranded DNA; mostly efficient on T/G, A/G and G/G mismatches, less efficient for T/T and poorly efficient for C/C, A/A, T/C and A/C. This is Endonuclease 5 from Arabidopsis thaliana (Mouse-ear cress).